The primary structure comprises 98 residues: uncharacterized protein (98 aa).

It belongs to the HHV-5 UL19 protein family.

This is an uncharacterized protein from Human cytomegalovirus (strain AD169) (HHV-5).